The following is a 431-amino-acid chain: Adenylosuccinate synthetase (431 aa).

Residues 12-18 and 40-42 contribute to the GTP site; these read GDEGKGK and GHT. Asp13 acts as the Proton acceptor in catalysis. Residues Asp13 and Gly40 each coordinate Mg(2+). IMP-binding positions include 13–16, 38–41, Thr129, Arg143, Gln224, Thr239, and Arg303; these read DEGK and NAGH. His41 (proton donor) is an active-site residue. 299-305 provides a ligand contact to substrate; that stretch reads VTTGRAR. Residues Arg305, 331–333, and 413–415 each bind GTP; these read KLD and GVG.

It belongs to the adenylosuccinate synthetase family. As to quaternary structure, homodimer. Mg(2+) is required as a cofactor.

It localises to the cytoplasm. It catalyses the reaction IMP + L-aspartate + GTP = N(6)-(1,2-dicarboxyethyl)-AMP + GDP + phosphate + 2 H(+). The protein operates within purine metabolism; AMP biosynthesis via de novo pathway; AMP from IMP: step 1/2. In terms of biological role, plays an important role in the de novo pathway of purine nucleotide biosynthesis. Catalyzes the first committed step in the biosynthesis of AMP from IMP. The sequence is that of Adenylosuccinate synthetase from Mycobacterium sp. (strain KMS).